Reading from the N-terminus, the 149-residue chain is D-aminoacyl-tRNA deacylase (149 aa).

The Gly-cisPro motif, important for rejection of L-amino acids signature appears at Gly-137–Pro-138.

This sequence belongs to the DTD family. As to quaternary structure, homodimer.

It is found in the cytoplasm. It catalyses the reaction glycyl-tRNA(Ala) + H2O = tRNA(Ala) + glycine + H(+). The enzyme catalyses a D-aminoacyl-tRNA + H2O = a tRNA + a D-alpha-amino acid + H(+). Its function is as follows. An aminoacyl-tRNA editing enzyme that deacylates mischarged D-aminoacyl-tRNAs. Also deacylates mischarged glycyl-tRNA(Ala), protecting cells against glycine mischarging by AlaRS. Acts via tRNA-based rather than protein-based catalysis; rejects L-amino acids rather than detecting D-amino acids in the active site. By recycling D-aminoacyl-tRNA to D-amino acids and free tRNA molecules, this enzyme counteracts the toxicity associated with the formation of D-aminoacyl-tRNA entities in vivo and helps enforce protein L-homochirality. The protein is D-aminoacyl-tRNA deacylase of Desulfotalea psychrophila (strain LSv54 / DSM 12343).